Reading from the N-terminus, the 137-residue chain is Fluoride-specific ion channel FluC 1 (137 aa).

The next 4 helical transmembrane spans lie at P3–L23, I42–L62, I69–V89, and M107–A127. Na(+) is bound by residues G76 and T79.

The protein belongs to the fluoride channel Fluc/FEX (TC 1.A.43) family.

It localises to the cell membrane. The catalysed reaction is fluoride(in) = fluoride(out). Its activity is regulated as follows. Na(+) is not transported, but it plays an essential structural role and its presence is essential for fluoride channel function. Fluoride-specific ion channel. Important for reducing fluoride concentration in the cell, thus reducing its toxicity. In Leifsonia xyli subsp. xyli (strain CTCB07), this protein is Fluoride-specific ion channel FluC 1.